The chain runs to 531 residues: 2,3-bisphosphoglycerate-independent phosphoglycerate mutase (531 aa).

Mn(2+) contacts are provided by aspartate 13 and serine 63. Serine 63 acts as the Phosphoserine intermediate in catalysis. Residues histidine 124, 154-155, arginine 187, arginine 193, 261-264, and lysine 342 each bind substrate; these read RD and RPDR. Residues aspartate 420, histidine 424, aspartate 462, histidine 463, and histidine 480 each coordinate Mn(2+).

This sequence belongs to the BPG-independent phosphoglycerate mutase family. Monomer. Mn(2+) serves as cofactor.

The enzyme catalyses (2R)-2-phosphoglycerate = (2R)-3-phosphoglycerate. Its pathway is carbohydrate degradation; glycolysis; pyruvate from D-glyceraldehyde 3-phosphate: step 3/5. In terms of biological role, catalyzes the interconversion of 2-phosphoglycerate and 3-phosphoglycerate. The chain is 2,3-bisphosphoglycerate-independent phosphoglycerate mutase from Mycoplasma capricolum subsp. capricolum (strain California kid / ATCC 27343 / NCTC 10154).